The sequence spans 2278 residues: Protein Ycf2 (2278 aa).

An ATP-binding site is contributed by 1632–1639 (GSIGTGRS).

This sequence belongs to the Ycf2 family.

The protein localises to the plastid. It localises to the chloroplast stroma. Probable ATPase of unknown function. Its presence in a non-photosynthetic plant (Epifagus virginiana) and experiments in tobacco indicate that it has an essential function which is probably not related to photosynthesis. In Solanum bulbocastanum (Wild potato), this protein is Protein Ycf2.